A 394-amino-acid polypeptide reads, in one-letter code: Elongation factor Tu 1 (394 aa).

One can recognise a tr-type G domain in the interval 10–204 (KPHVNVGTIG…ALDSYIPEPE (195 aa)). Residues 19–26 (GHVDHGKT) form a G1 region. Position 19-26 (19-26 (GHVDHGKT)) interacts with GTP. Threonine 26 contributes to the Mg(2+) binding site. The tract at residues 60 to 64 (GITIS) is G2. The tract at residues 81–84 (DCPG) is G3. Residues 81-85 (DCPGH) and 136-139 (NKCD) contribute to the GTP site. The tract at residues 136 to 139 (NKCD) is G4. Residues 174-176 (SAL) are G5.

Belongs to the TRAFAC class translation factor GTPase superfamily. Classic translation factor GTPase family. EF-Tu/EF-1A subfamily. Monomer.

It is found in the cytoplasm. The catalysed reaction is GTP + H2O = GDP + phosphate + H(+). Its function is as follows. GTP hydrolase that promotes the GTP-dependent binding of aminoacyl-tRNA to the A-site of ribosomes during protein biosynthesis. This is Elongation factor Tu 1 from Vibrio vulnificus (strain YJ016).